The primary structure comprises 255 residues: 3-oxo-5-alpha-steroid 4-dehydrogenase 1 (255 aa).

The next 5 helical transmembrane spans lie at 6–26, 82–102, 107–127, 142–162, and 205–225; these read LCLL…AFVG, VLLA…PVLI, PTLL…GYLQ, VTHP…VINI, and FALA…LCAL.

Belongs to the steroid 5-alpha reductase family.

It is found in the microsome membrane. The protein resides in the endoplasmic reticulum membrane. It catalyses the reaction a 3-oxo-5alpha-steroid + NADP(+) = a 3-oxo-Delta(4)-steroid + NADPH + H(+). The catalysed reaction is 5alpha-pregnane-3,20-dione + NADP(+) = progesterone + NADPH + H(+). It carries out the reaction 17beta-hydroxy-5alpha-androstan-3-one + NADP(+) = testosterone + NADPH + H(+). The enzyme catalyses androst-4-ene-3,17-dione + NADPH + H(+) = 5alpha-androstan-3,17-dione + NADP(+). Functionally, converts testosterone into 5-alpha-dihydrotestosterone and progesterone or corticosterone into their corresponding 5-alpha-3-oxosteroids. It plays a central role in sexual differentiation and androgen physiology. This Mus musculus (Mouse) protein is 3-oxo-5-alpha-steroid 4-dehydrogenase 1.